Consider the following 453-residue polypeptide: Transmembrane protease serine 3 (453 aa).

The Cytoplasmic portion of the chain corresponds to 1–48 (MGENDPPAAEAPFSFRSLFGLDDLKISPVAPDGDAVAAQILSLLPLKF). A helical; Signal-anchor for type II membrane protein transmembrane segment spans residues 49 to 69 (FPIIVIGIIALILALAIGLGI). Topologically, residues 70-453 (HFDCSGKYRC…HEQLERDLKT (384 aa)) are extracellular. The LDL-receptor class A domain maps to 72–108 (DCSGKYRCHSSFKCIELTARCDGVSDCKNAEDEYRCV). 10 cysteine pairs are disulfide-bonded: Cys-73/Cys-85, Cys-79/Cys-98, Cys-92/Cys-107, Cys-129/Cys-194, Cys-142/Cys-204, Cys-207/Cys-324, Cys-242/Cys-258, Cys-338/Cys-406, Cys-369/Cys-385, and Cys-396/Cys-424. Positions 104 to 205 (EYRCVRVSGQ…SGHVVTLKCS (102 aa)) constitute an SRCR domain. In terms of domain architecture, Peptidase S1 spans 217-448 (IVGGNMSSLT…FLDWIHEQLE (232 aa)). A glycan (N-linked (GlcNAc...) asparagine) is linked at Asn-221. Active-site charge relay system residues include His-257 and Asp-304. Ser-400 functions as the Charge relay system in the catalytic mechanism.

This sequence belongs to the peptidase S1 family. Post-translationally, undergoes autoproteolytic activation. Strongly expressed in liver, cochlea, brain, cerebellum, spleen, lung, and muscle and at a lower degree in retina, kidney, and heart. Expressed in the spiral ganglion, the cells supporting the organ of Corti and the stria vascularis. Isoform 2 is strongly expressed only in the cochlea with very faint expression in the cerebellum, spleen and muscle.

The protein localises to the endoplasmic reticulum membrane. Functionally, probable serine protease that plays a role in hearing. Acts as a permissive factor for cochlear hair cell survival and activation at the onset of hearing and is required for saccular hair cell survival. Activates ENaC (in vitro). The polypeptide is Transmembrane protease serine 3 (Tmprss3) (Mus musculus (Mouse)).